Reading from the N-terminus, the 37-residue chain is Cytochrome b6-f complex subunit 5 (37 aa).

The helical transmembrane segment at 5 to 25 (FLLGIILGLIPITLIGLFVTA) threads the bilayer.

This sequence belongs to the PetG family. In terms of assembly, the 4 large subunits of the cytochrome b6-f complex are cytochrome b6, subunit IV (17 kDa polypeptide, PetD), cytochrome f and the Rieske protein, while the 4 small subunits are PetG, PetL, PetM and PetN. The complex functions as a dimer.

The protein resides in the plastid membrane. In terms of biological role, component of the cytochrome b6-f complex, which mediates electron transfer between photosystem II (PSII) and photosystem I (PSI), cyclic electron flow around PSI, and state transitions. PetG is required for either the stability or assembly of the cytochrome b6-f complex. The sequence is that of Cytochrome b6-f complex subunit 5 from Cuscuta obtusiflora (Peruvian dodder).